The sequence spans 448 residues: tRNA-2-methylthio-N(6)-dimethylallyladenosine synthase (448 aa).

Positions 2 to 119 (KKLYIKTFGC…LSDLIAQRRK (118 aa)) constitute an MTTase N-terminal domain. Positions 11, 48, 82, 156, 160, and 163 each coordinate [4Fe-4S] cluster. Positions 142–375 (RQTRGSAYVS…LALIEGQSNQ (234 aa)) constitute a Radical SAM core domain. Positions 378 to 444 (QKMLGKTERV…NYTLRGELVE (67 aa)) constitute a TRAM domain.

The protein belongs to the methylthiotransferase family. MiaB subfamily. As to quaternary structure, monomer. It depends on [4Fe-4S] cluster as a cofactor.

The protein resides in the cytoplasm. It carries out the reaction N(6)-dimethylallyladenosine(37) in tRNA + (sulfur carrier)-SH + AH2 + 2 S-adenosyl-L-methionine = 2-methylsulfanyl-N(6)-dimethylallyladenosine(37) in tRNA + (sulfur carrier)-H + 5'-deoxyadenosine + L-methionine + A + S-adenosyl-L-homocysteine + 2 H(+). Its function is as follows. Catalyzes the methylthiolation of N6-(dimethylallyl)adenosine (i(6)A), leading to the formation of 2-methylthio-N6-(dimethylallyl)adenosine (ms(2)i(6)A) at position 37 in tRNAs that read codons beginning with uridine. The polypeptide is tRNA-2-methylthio-N(6)-dimethylallyladenosine synthase (Polynucleobacter asymbioticus (strain DSM 18221 / CIP 109841 / QLW-P1DMWA-1) (Polynucleobacter necessarius subsp. asymbioticus)).